Consider the following 737-residue polypeptide: Protein OPG064 (737 aa).

Methionine 1 bears the N-acetylmethionine; by host mark. The cysteines at positions 496 and 535 are disulfide-linked.

The protein belongs to the orthopoxvirus OPG064 family. As to quaternary structure, interacts with host KLC2; this interaction promotes IEV trafficking by engaging the host kinesin-1 complex. Interacts with protein OPG056. In terms of processing, N-acetylated on initiator methionine by host.

In terms of biological role, plays a role in intracellular enveloped virus (IEV) transport to the cell surface on microtubules. Together with protein OPG056, forms a complex that interacts with host KLC2 (kinesin light chain isoform 2) to engage the kinesin-1 complex and thereby promote IEV trafficking. This is Protein OPG064 (OPG064) from Homo sapiens (Human).